Here is a 235-residue protein sequence, read N- to C-terminus: Large ribosomal subunit protein bL25 (235 aa).

The segment at 201–235 (PVAEAKGKGKAAKPAATAKPAAAAAKPAAKPKAKK) is disordered. The segment covering 212 to 228 (AKPAATAKPAAAAAKPA) has biased composition (low complexity).

The protein belongs to the bacterial ribosomal protein bL25 family. CTC subfamily. As to quaternary structure, part of the 50S ribosomal subunit; part of the 5S rRNA/L5/L18/L25 subcomplex. Contacts the 5S rRNA. Binds to the 5S rRNA independently of L5 and L18.

Its function is as follows. This is one of the proteins that binds to the 5S RNA in the ribosome where it forms part of the central protuberance. In Verminephrobacter eiseniae (strain EF01-2), this protein is Large ribosomal subunit protein bL25.